Reading from the N-terminus, the 228-residue chain is UPF0173 metal-dependent hydrolase LMHCC_0991 (228 aa).

This sequence belongs to the UPF0173 family.

The protein is UPF0173 metal-dependent hydrolase LMHCC_0991 of Listeria monocytogenes serotype 4a (strain HCC23).